Consider the following 171-residue polypeptide: uncharacterized protein (171 aa).

Transmembrane regions (helical) follow at residues 13-35 (VGASLKVPAIAAGAAFFLSIATA) and 50-72 (ATVLALGAGVTAYALRALLAYVV).

It is found in the cell membrane. This is an uncharacterized protein from Treponema pallidum (strain Nichols).